The primary structure comprises 272 residues: Cell division protein FtsQ (272 aa).

Topologically, residues 1–20 (MSSYAPREIPLDIRLMQGTS) are cytoplasmic. The helical transmembrane segment at 21–40 (RALFWLVALGCLFVAGHWLM) threads the bilayer. Residues 41-272 (QRNWWDIRAV…KTPQPAGRKD (232 aa)) lie on the Periplasmic side of the membrane. The POTRA domain occupies 45-114 (WDIRAVRLQG…MQLAVTLQAQ (70 aa)).

The protein belongs to the FtsQ/DivIB family. FtsQ subfamily. As to quaternary structure, part of a complex composed of FtsB, FtsL and FtsQ.

The protein localises to the cell inner membrane. Its function is as follows. Essential cell division protein. May link together the upstream cell division proteins, which are predominantly cytoplasmic, with the downstream cell division proteins, which are predominantly periplasmic. May control correct divisome assembly. The protein is Cell division protein FtsQ of Thiomonas arsenitoxydans (strain DSM 22701 / CIP 110005 / 3As).